A 425-amino-acid chain; its full sequence is Putative TRAP transporter large permease protein HI_1029 (425 aa).

The next 13 helical transmembrane spans lie at 3 to 23 (VIIFLSVLLGTIILGVPVAFA), 24 to 44 (LLICGIALMLHLDFFNAQILA), 54 to 74 (FSLMAIPFFILAGEIMNEGGL), 93 to 113 (LGFVAILSAMIMASLSGSAVA), 139 to 159 (LIGTAGIIAPIIPPSIPFIVF), 169 to 189 (KLFLAGIFPGVIMGCCLAILW), 217 to 237 (VWALMLPVIIIGGFRSGIFTP), 241 to 261 (GVVATFYALIVSLFIYHELPL), 275 to 295 (TAVVMFLVASANVTGYLITVA), 312 to 332 (PTILLLVIMLAVFVIGMVMDL), 334 to 354 (PTVLILTPVLMPLVEEAGIDP), 355 to 375 (VYFGVLFILNTSIGLITPPVG), and 399 to 419 (YLGMMIMLLLTFIFIPELILM).

This sequence belongs to the TRAP transporter large permease family.

It is found in the cell inner membrane. The chain is Putative TRAP transporter large permease protein HI_1029 from Haemophilus influenzae (strain ATCC 51907 / DSM 11121 / KW20 / Rd).